A 602-amino-acid polypeptide reads, in one-letter code: Cytokine-like nuclear factor N-PAC (602 aa).

Residues serine 8 and serine 10 each carry the phosphoserine modification. The PWWP domain maps to 22–81 (PKDLIWAKMKGFTPWPGMIVDPPLDLLSQQRRANTKCVFFFGSRNFAWIEENNIKPFEGP). The segment at 162 to 262 (GSPDEGDGLD…ASSTPTGRRR (101 aa)) is disordered. Composition is skewed to polar residues over residues 176 to 188 (ADSSASPVTSPAV), 204 to 217 (AATSVKSTKGSAKS), and 224 to 233 (SAQQSPSGPS). Residues serine 224, serine 228, and serine 243 each carry the phosphoserine modification. The dehydrogenase domain stretch occupies residues 309 to 602 (RDIVPSEQTF…SSAVFVRSRF (294 aa)). Residues 319 to 333 (GFLGLGMMGSTIVKD), threonine 411, and arginine 554 contribute to the NAD(+) site.

This sequence belongs to the HIBADH-related family. NP60 subfamily. Binds to mononucleosomes. Interacts with male-specific lethal (MSL) histone acetyltransferase complex at least composed of mof, msl-1, msl-2 and msl-3.

Its subcellular location is the chromosome. Its function is as follows. Nucleosome-destabilizing factor that is recruited to genes during transcriptional activation and colocalizes with a subset of trimethylated 'Lys-36' histone H3 (H3K36me3)-enriched regions. Binds DNA (in vitro). Facilitates Pol II transcription through nucleosomes. Facilitates male-specific lethal (MSL) histone acetyltransferase complex targeting to active genes on the X chromosome. Stimulates the acetylation of 'Lys-56' of nucleosomal histone H3 (H3K56ac) by nej. May have oxidoreductase activity. The polypeptide is Cytokine-like nuclear factor N-PAC (Drosophila melanogaster (Fruit fly)).